The primary structure comprises 201 residues: LIM domain-containing protein PLIM2b (201 aa).

2 LIM zinc-binding domains span residues 8–68 and 103–163; these read DKCT…LFKE and DKCA…LFME. Residues 171 to 201 form a disordered region; that stretch reads KKKSESQEVLPEVVPEEQPAPPPPDENREDN. Residues 177-187 are compositionally biased toward low complexity; the sequence is QEVLPEVVPEE.

As to quaternary structure, interacts with NEK3.

The polypeptide is LIM domain-containing protein PLIM2b (Oryza sativa subsp. japonica (Rice)).